A 542-amino-acid polypeptide reads, in one-letter code: GPI alpha-1,2-mannosyltransferase 3 (542 aa).

The segment at 1-36 (MESQAADYNPASRNLHGSSGEMKLRRRKSRQYVSAQ) is disordered. The next 8 helical transmembrane spans lie at 52–72 (LVLFTIALRILNCFLVQTSFV), 125–145 (VQFLIWIPRLGQALLSAVADI), 213–233 (LVALACVVRPTALIPWVPLLF), 244–264 (HLTLHHFLPVGFITFSLSLII), 304–324 (GFPVVLGTHLPFFIHGCFLAP), 327–347 (LHILLLTVLWTLLVYSMLGHK), 351–371 (FIYPVLPFCMVFCGYSLAHLK), and 376–396 (AALSFLLLSNVPLAFYTGLVH). N-linked (GlcNAc...) asparagine glycosylation is present at Asn-480.

Belongs to the glycosyltransferase 22 family. PIGB subfamily.

The protein localises to the endoplasmic reticulum membrane. The protein operates within glycolipid biosynthesis; glycosylphosphatidylinositol-anchor biosynthesis. Functionally, alpha-1,2-mannosyltransferase that catalyzes the transfer of the third mannose, via an alpha-1,2 bond, from a dolichol-phosphate-mannose (Dol-P-Man) to an alpha-D-Man-(1-&gt;6)-2-PEtn-alpha-D-Man-(1-&gt;4)-alpha-D-GlcN-(1-&gt;6)-(1-radyl,2-acyl-sn-glycero-3-phospho)-2-acyl-inositol intermediate to generate an alpha-D-Man-(1-&gt;2)-alpha-D-Man-(1-&gt;6)-2-PEtn-alpha-D-Man-(1-&gt;4)-alpha-D-GlcN-(1-&gt;6)-(1-radyl,2-acyl-sn-glycero-3-phospho)-2-acyl-inositol (also termed H6) and participates in the nineth step of the glycosylphosphatidylinositol-anchor biosynthesis. May also add the third mannose to an alpha-D-Man-(1-&gt;6)-alpha-D-Man-(1-&gt;4)-alpha-D-GlcN-(1-&gt;6)-(1-radyl,2-acyl-sn-glycero-3-phospho)-2-acyl-inositol (also termed H3) intermediate generating an alpha-D-Man-(1-&gt;2)-alpha-D-Man-(1-&gt;6)-alpha-D-Man-(1-&gt;4)-alpha-D-GlcN-(1-&gt;6)-(1-radyl,2-acyl-sn-glycero-3-phospho)-2-acyl-inositol (also termed H4). This chain is GPI alpha-1,2-mannosyltransferase 3, found in Mus musculus (Mouse).